We begin with the raw amino-acid sequence, 66 residues long: Probable Sec-independent protein translocase protein TatE (66 aa).

The helical transmembrane segment at 1–21 (MEGISITKLLVIAVLIVLLFG) threads the bilayer. Residues 46-66 (ETPAAKKSDGAEAAPRVENKE) are disordered.

Belongs to the TatA/E family. TatE subfamily.

The protein localises to the cell inner membrane. In terms of biological role, part of the twin-arginine translocation (Tat) system that transports large folded proteins containing a characteristic twin-arginine motif in their signal peptide across membranes. TatE shares overlapping functions with TatA. This chain is Probable Sec-independent protein translocase protein TatE, found in Edwardsiella piscicida.